The following is a 342-amino-acid chain: Succinylglutamate desuccinylase (342 aa).

Zn(2+)-binding residues include histidine 63, glutamate 66, and histidine 155. Residue glutamate 219 is part of the active site.

This sequence belongs to the AspA/AstE family. Succinylglutamate desuccinylase subfamily. The cofactor is Zn(2+).

It carries out the reaction N-succinyl-L-glutamate + H2O = L-glutamate + succinate. It participates in amino-acid degradation; L-arginine degradation via AST pathway; L-glutamate and succinate from L-arginine: step 5/5. In terms of biological role, transforms N(2)-succinylglutamate into succinate and glutamate. The chain is Succinylglutamate desuccinylase from Vibrio cholerae serotype O1 (strain ATCC 39315 / El Tor Inaba N16961).